Reading from the N-terminus, the 101-residue chain is Large ribosomal subunit protein uL24 (101 aa).

It belongs to the universal ribosomal protein uL24 family. Part of the 50S ribosomal subunit.

Its function is as follows. One of two assembly initiator proteins, it binds directly to the 5'-end of the 23S rRNA, where it nucleates assembly of the 50S subunit. Functionally, one of the proteins that surrounds the polypeptide exit tunnel on the outside of the subunit. The sequence is that of Large ribosomal subunit protein uL24 from Streptococcus suis (strain 98HAH33).